Consider the following 429-residue polypeptide: Growth/differentiation factor 2 (429 aa).

The first 22 residues, 1–22 (MCPGALWVALPLLSLLAGSLQG), serve as a signal peptide directing secretion. Positions 23–319 (KPLQSWGRGS…AGSTLARRKR (297 aa)) are excised as a propeptide. N-linked (GlcNAc...) asparagine glycans are attached at residues Asn71 and Asn136. The segment covering 283-301 (VLKKLSKDGSTEAGESSHE) has biased composition (basic and acidic residues). The interval 283 to 308 (VLKKLSKDGSTEAGESSHEEDTDGHV) is disordered. Disulfide bonds link Cys327-Cys393, Cys356-Cys426, and Cys360-Cys428. Residues 402–416 (SVLYKDDMGVPTLKY) form an interaction with ENG region.

It belongs to the TGF-beta family. As to quaternary structure, homodimer; disulfide-linked. Detected in extracellular fluid as mature homodimer, and in complex with its propeptide. Interacts with ACVRL1, BMPR2 and ACVR2B with high affinity (in vitro). Identified in a complex with ACVRL1 and ACVR2B. Has ten times lower affinity for ACVR2A (in vitro). Interacts with ENG, forming a heterotetramer with a 2:2 stoichiometry. Can form a heteromeric complex with ENG and ACVRL1. Interacts with type I receptor ACVR1. A reversible disulfide bond can be formed between the two subunits in the homodimer; this has no effect on GDF2 activity. Detected in blood plasma (at protein level).

The protein localises to the secreted. Its function is as follows. Potent circulating inhibitor of angiogenesis. Signals through the type I activin receptor ACVRL1 but not other Alks. Signaling through SMAD1 in endothelial cells requires TGF-beta coreceptor endoglin/ENG. In Homo sapiens (Human), this protein is Growth/differentiation factor 2 (GDF2).